Consider the following 442-residue polypeptide: Galactose/N-acetylgalactosamine-binding lectin CEL-III (442 aa).

Residues 1–10 constitute a propeptide, removed in mature form; the sequence is MVSLVPCGFA. The residue at position 11 (Gln-11) is a Pyrrolidone carboxylic acid. Residues 11–304 are has hemagglutinating activity towards rabbit erythrocytes, but no hemolytic activity towards them; it reads QVLCTNPLDI…DWEVPTATWN (294 aa). Cystine bridges form between Cys-14–Cys-59, Cys-31–Cys-48, and Cys-72–Cys-88. D-galactose is bound by residues Asp-19 and 33-36; that span reads DIVG. 2 Ricin B-type lectin domains span residues 28 to 102 and 115 to 245; these read SKQC…RWRL and EQVA…WSRP. Residues Asp-33, Ile-34, and Gly-36 each coordinate Ca(2+). 2 residues coordinate Mg(2+): Asn-42 and Ile-43. Asp-49 contributes to the D-galactose binding site. Asp-53 is a Ca(2+) binding site. Mg(2+)-binding residues include Asn-82 and Val-83. D-galactose contacts are provided by residues Val-117 and 131–134; that span reads DVEG. Cys-129 and Cys-146 are disulfide-bonded. Ca(2+)-binding residues include Asp-131, Val-132, and Gly-134. Residue Ile-141 coordinates Mg(2+). Residue 144-147 coordinates D-galactose; that stretch reads YDCQ. 4 residues coordinate Ca(2+): Asp-151, Asp-178, Val-179, and Gly-181. Cys-176 and Cys-193 are disulfide-bonded. 178 to 181 is a D-galactose binding site; sequence DVEG. 2 residues coordinate Mg(2+): Asn-187 and Val-188. Position 191–194 (191–194) interacts with D-galactose; that stretch reads YSCE. Ca(2+) contacts are provided by Asp-198, Asp-219, Val-220, and Gly-222. The cysteines at positions 217 and 234 are disulfide-linked. 219–222 lines the D-galactose pocket; sequence DVEG. Mg(2+)-binding residues include Asn-228 and Val-229. 232–235 is a binding site for D-galactose; the sequence is YRCD. Asp-239 contributes to the Ca(2+) binding site. 2 disulfides stabilise this stretch: Cys-249/Cys-254 and Cys-264/Cys-281. The Ricin B-type lectin 3 domain occupies 261–293; it reads SNKCLDVSGDQGTGDVGTWQCDGLPDQRFKWVF. Ca(2+) contacts are provided by Asp-266, Val-267, and Gly-269. 266-269 contacts D-galactose; that stretch reads DVSG. Mg(2+) is bound by residues Asp-275 and Val-276. D-galactose is bound by residues 279 to 282 and Asp-286; that span reads WQCD. A Ca(2+)-binding site is contributed by Asp-286. The segment at 294–442 is has a strong tendency to self-associate leading to formation of oligomers; sequence DDWEVPTATW…NEDCTFCTDI (149 aa). Cystine bridges form between Cys-308–Cys-390, Cys-377–Cys-416, Cys-425–Cys-439, and Cys-431–Cys-436.

Oligomerizes in the human and rabbit erythrocyte membranes. Oligomerization is induced by binding of beta-1,4-linked disaccharide ligands such as lactose, lactulose, N-acetyllactosamine and phenyl-beta-D-galactoside, but only a little by N-acetylgalactosamine and galactose, and not at all by melibiose in aqueous solution in the presence of high salt concentration and pH 10. Forms heptamers that assemble into larger 21mer oligomers, which may be inserted as a transmembrane pore to the erythrocyte membrane. Ca(2+) serves as cofactor. The cofactor is Mg(2+). Expressed in body fluid (at protein level).

It is found in the secreted. Its activity is regulated as follows. Ca(2+) is required for hemolytic activity and the activity increases with increasing calcium concentration. Hemolytic activity is inhibited by N-acetylgalactosamine (GalNAc), lactose, lactulose, galactosamine, dextran with molecular masses greater than 4 kDa, to a lesser extent by inulin and only slightly by sucrose and melezitose, but not by glucose or mannose. The activity is abolished in the presence of 10 mM EDTA. Lactose-binding increases with increasing calcium concentration, but calcium has no effect on hemagglutinating activity. Cytotoxic effect on Madin-Darby canine kidney (MDCK) cell line is strongly inhibited by galactose, lactose and N-acetylgalactosamine (GalNAc), but not by raffinose, N-acetylglucosamine (GlcNAc), glucose, mannose, ribose or sucrose. Pore formation in artificial lactosyl ceramide (LacCer) or globotetraosylceramide (Gb4Cer) containing liposomes is strongly inhibited by lactose. Functionally, galactose/N-acetylgalactosamine (Gal/GalNAc)-binding lectin with hemolytic activity. Favors saccharides that have a beta-1,4 linkage at the non-reducing end rather than saccharides having alpha-1,6 or alpha-1,4 linkages. Binds lactose, lactulose, GalNAc, galactosamine, methyl alpha-galactopyranoside, methyl beta-galactopyranoside, N-acetyllactosamine, p-nitrophenyl beta-D-galactopyranoside (pNP-Gal), p-nitrophenyl N-acetyl-beta-D-galactosaminide (pNP-GalNAc), asialofetuin, and human erythrocyte membrane lipids lactosyl ceramide (LacCer) and globoside globotetraosylceramide (Gb4Cer). Binds moderately to galactose, melibiose, raffinose, fucose, methyl alpha-galactoside and methyl beta-galactoside. Binds weakly to glucose, mannose and N-acetylglucosamine (GlcNAc). Has hemolytic activity towards human (A, B and O-type), rabbit and rat erythrocytes, but not towards mouse, chicken or horse erythrocytes. Forms ion-permeable transmembrane pores in the erythrocyte membrane as well as in artificial liposomes containing human erythrocyte membrane lipids LacCer, Gb4Cer and galactosyl ceramide (GalCer) leading to destruction of the membrane. Has hemagglutinating activity towards rabbit, human and rat erythrocytes, and at relatively high concentrations towards chicken and horse erythrocytes, but not towards mouse erythrocytes. Has dose-dependent cytotoxic effect on Madin-Darby canine kidney (MDCK), African green monkey kidney (Vero) and human epithelia carcinoma (HeLa) cell lines, but Chinese hamster ovary (CHO), rat sarcoma (XC) and potoroo rat kangaroo kidney (PtK1) cells are highly resistant to the cytotoxic effect of this protein. Impairs malaria parasite development in malaria parasite infected transgenic A.stephensi mosquitoes expressing this protein specifically in their midguts. Binds to ookinetes and leads to strong dose-dependent inhibition of ookinete formation in vitro. Leads to severely impaired oocyst formation and significantly reduced sporozoite production of rodent malaria parasite P.berghei in the salivary glands of the transgenic mosquitoes. The parasite transmission to uninfected mice (vectorial competence) of these mosquitoes is significantly impaired. Also leads to severely impaired oocyst formation of human malaria parasite P.falciparum in transgenic mosquitoes fed on mature P.falciparum gametocyte cultures. May be involved in defense mechanisms acting as a toxic protein to foreign microorganisms. May act in defense against predators. The sequence is that of Galactose/N-acetylgalactosamine-binding lectin CEL-III from Pseudocnus echinatus (Sea cucumber).